Consider the following 415-residue polypeptide: Squalene synthase 3 (415 aa).

The next 2 helical transmembrane spans lie at 281 to 301 (AIFRFCAIPQIMAIGTLALCY) and 392 to 412 (LIIILFIILAILYAYLSSNLP).

Belongs to the phytoene/squalene synthase family. Requires Mg(2+) as cofactor. The cofactor is Mn(2+).

Its subcellular location is the endoplasmic reticulum membrane. The catalysed reaction is 2 (2E,6E)-farnesyl diphosphate + NADH + H(+) = squalene + 2 diphosphate + NAD(+). The enzyme catalyses 2 (2E,6E)-farnesyl diphosphate + NADPH + H(+) = squalene + 2 diphosphate + NADP(+). It functions in the pathway terpene metabolism; lanosterol biosynthesis; lanosterol from farnesyl diphosphate: step 1/3. In terms of biological role, component of the triterpene saponins (e.g. ginsenosides or panaxosides) and phytosterols biosynthetic pathways. Catalyzes the biosynthesis of squalene. This is Squalene synthase 3 from Panax ginseng (Korean ginseng).